The sequence spans 631 residues: 1-deoxy-D-xylulose-5-phosphate synthase (631 aa).

Thiamine diphosphate contacts are provided by residues His-87 and 128–130 (GHS). Residue Asp-159 participates in Mg(2+) binding. Thiamine diphosphate contacts are provided by residues 160–161 (GA), Asn-188, Phe-295, and Glu-377. Asn-188 is a binding site for Mg(2+).

Belongs to the transketolase family. DXPS subfamily. Homodimer. The cofactor is Mg(2+). Requires thiamine diphosphate as cofactor.

It carries out the reaction D-glyceraldehyde 3-phosphate + pyruvate + H(+) = 1-deoxy-D-xylulose 5-phosphate + CO2. It participates in metabolic intermediate biosynthesis; 1-deoxy-D-xylulose 5-phosphate biosynthesis; 1-deoxy-D-xylulose 5-phosphate from D-glyceraldehyde 3-phosphate and pyruvate: step 1/1. In terms of biological role, catalyzes the acyloin condensation reaction between C atoms 2 and 3 of pyruvate and glyceraldehyde 3-phosphate to yield 1-deoxy-D-xylulose-5-phosphate (DXP). The sequence is that of 1-deoxy-D-xylulose-5-phosphate synthase from Pseudomonas entomophila (strain L48).